The chain runs to 291 residues: Lys-63-specific deubiquitinase BRCC36-like (291 aa).

In terms of domain architecture, MPN spans 12–179 (VYLESDAFLV…YTCFQSVQAS (168 aa)). Zn(2+) contacts are provided by H122, H124, and D135. Positions 122–135 (HSHPHITVWPSHVD) match the JAMM motif motif. Residues 259 to 286 (LQWLEDRLEQNQQRLQELEQEKEDLMEE) adopt a coiled-coil conformation.

It belongs to the peptidase M67A family. BRCC36 subfamily.

Functionally, metalloprotease that specifically cleaves 'Lys-63'-linked polyubiquitin chains. This chain is Lys-63-specific deubiquitinase BRCC36-like, found in Mus musculus (Mouse).